The chain runs to 200 residues: Small ribosomal subunit protein uS4 (200 aa).

The region spanning 92-155 (SRLDAVVYSL…QNLDIIKESV (64 aa)) is the S4 RNA-binding domain.

The protein belongs to the universal ribosomal protein uS4 family. As to quaternary structure, part of the 30S ribosomal subunit. Contacts protein S5. The interaction surface between S4 and S5 is involved in control of translational fidelity.

One of the primary rRNA binding proteins, it binds directly to 16S rRNA where it nucleates assembly of the body of the 30S subunit. In terms of biological role, with S5 and S12 plays an important role in translational accuracy. The sequence is that of Small ribosomal subunit protein uS4 from Staphylococcus epidermidis (strain ATCC 35984 / DSM 28319 / BCRC 17069 / CCUG 31568 / BM 3577 / RP62A).